The chain runs to 357 residues: S-adenosylmethionine:tRNA ribosyltransferase-isomerase (357 aa).

Belongs to the QueA family. In terms of assembly, monomer.

Its subcellular location is the cytoplasm. The catalysed reaction is 7-aminomethyl-7-carbaguanosine(34) in tRNA + S-adenosyl-L-methionine = epoxyqueuosine(34) in tRNA + adenine + L-methionine + 2 H(+). Its pathway is tRNA modification; tRNA-queuosine biosynthesis. Transfers and isomerizes the ribose moiety from AdoMet to the 7-aminomethyl group of 7-deazaguanine (preQ1-tRNA) to give epoxyqueuosine (oQ-tRNA). This Proteus mirabilis (strain HI4320) protein is S-adenosylmethionine:tRNA ribosyltransferase-isomerase.